Here is a 241-residue protein sequence, read N- to C-terminus: Orotidine 5'-phosphate decarboxylase (241 aa).

Substrate-binding positions include Asp16, Lys37, 64-73 (DLKFHDIPTT), Thr128, Arg190, Gln199, Gly219, and Arg220. The Proton donor role is filled by Lys66.

This sequence belongs to the OMP decarboxylase family. Type 1 subfamily. In terms of assembly, homodimer.

The catalysed reaction is orotidine 5'-phosphate + H(+) = UMP + CO2. It participates in pyrimidine metabolism; UMP biosynthesis via de novo pathway; UMP from orotate: step 2/2. In terms of biological role, catalyzes the decarboxylation of orotidine 5'-monophosphate (OMP) to uridine 5'-monophosphate (UMP). The polypeptide is Orotidine 5'-phosphate decarboxylase (Prochlorococcus marinus (strain NATL2A)).